We begin with the raw amino-acid sequence, 149 residues long: Large ribosomal subunit protein bL9 (149 aa).

It belongs to the bacterial ribosomal protein bL9 family.

In terms of biological role, binds to the 23S rRNA. The polypeptide is Large ribosomal subunit protein bL9 (Endomicrobium trichonymphae).